Here is a 308-residue protein sequence, read N- to C-terminus: MSEITAAMVKELREKTGAGMMDCKKALAETAGDMEAAIDWLRAKGIAKADKKSGRTAAEGLIGVSSQGTKAVVVEVNSETDFVARNDAFQELVRGIAKVAVSTDGTVDAVAAATYPASGKSVSDTIKDAIATIGENMNLRRSVALSVEDGVVATYIHNAVSDGLGKLGVLVALKSTGDKEALNAIGRQVAMHIAATAPLAIRPEEVDAAVAERERNVFIEQSRASGKPDNIIEKMVDGRMRKFFEEVALLSQAFVINPDLTVAAAIKEAEKAVGAPIEVAGMARLLLGEGVEKEETDFAAEVAAAVKG.

Residues 80–83 (TDFV) are involved in Mg(2+) ion dislocation from EF-Tu.

This sequence belongs to the EF-Ts family.

The protein resides in the cytoplasm. Functionally, associates with the EF-Tu.GDP complex and induces the exchange of GDP to GTP. It remains bound to the aminoacyl-tRNA.EF-Tu.GTP complex up to the GTP hydrolysis stage on the ribosome. The protein is Elongation factor Ts of Rhizobium johnstonii (strain DSM 114642 / LMG 32736 / 3841) (Rhizobium leguminosarum bv. viciae).